The sequence spans 458 residues: BUD13 homolog (458 aa).

3 disordered regions span residues 16 to 37 (SGDI…SGLR), 81 to 328 (KQTF…TEEL), and 437 to 458 (AKTE…AEYE). Over residues 138–148 (NRHDSDKDNSP) the composition is skewed to basic and acidic residues. 2 stretches are compositionally biased toward basic residues: residues 175-185 (RNRRSPPRTRR) and 208-218 (PRRRPSSPARR). 3 stretches are compositionally biased toward basic and acidic residues: residues 219 to 243 (RKDD…KKEE), 266 to 284 (RDLK…KMFE), and 314 to 328 (DQAK…TEEL). Residues 262–356 (LQSARDLKEE…AQLEEMARVA (95 aa)) are a coiled coil.

Belongs to the CWC26 family.

The chain is BUD13 homolog from Caenorhabditis elegans.